A 663-amino-acid polypeptide reads, in one-letter code: Cyclic nucleotide-gated channel alpha-2 (663 aa).

The interval 1-61 (MTEKANGVKS…QLAEMDAPQQ (61 aa)) is disordered. At 1-144 (MTEKANGVKS…PAGDWYYRWL (144 aa)) the chain is on the cytoplasmic side. Over residues 12 to 23 (PANNHNHHAPPA) the composition is skewed to low complexity. A helical membrane pass occupies residues 145-166 (FLIALPVLYNWCLLVARACFSD). Residues 167–176 (LQKGYYIVWL) lie on the Extracellular side of the membrane. A helical transmembrane segment spans residues 177–197 (VLDYVSDVVYIADLFIRLRTG). The Cytoplasmic segment spans residues 198 to 222 (FLEQGLLVKDTKKLRDNYIHTMQFK). The chain crosses the membrane as a helical span at residues 223–241 (LDVASIIPTDLIYFAVGIH). Residues 242 to 246 (NPEVR) are Extracellular-facing. A helical transmembrane segment spans residues 247–265 (FNRLLHFARMFEFFDRTET). Over 266 to 272 (RTSYPNI) the chain is Cytoplasmic. Residues 270–378 (PNIFRISNLI…GNVGSMISNM (109 aa)) are ion conduction pathway. A helical membrane pass occupies residues 273–296 (FRISNLILYILIIIHWNACIYYAI). Residues 297–319 (SKSIGFGVDTWVYPNITDPEYGY) are Extracellular-facing. 2 helical membrane-spanning segments follow: residues 320–354 (LSREYIYCLYWSTLTLTTIGETPPPVKDEEYLFVI) and 355–379 (FDFLIGVLIFATIVGNVGSMISNMN). The interval 337 to 340 (TIGE) is selectivity filter. Positions 380–456 (ATRAEFQAKI…STLKKVRIFQ (77 aa)) are C-linker. At 380 to 663 (ATRAEFQAKI…NSPEPPAEKP (284 aa)) the chain is on the cytoplasmic side. A cyclic nucleotide-binding domain region spans residues 460-580 (AGLLVELVLK…EERGREILMK (121 aa)). Residues glycine 520, serine 523, arginine 536, and threonine 537 each coordinate 3',5'-cyclic GMP. 3',5'-cyclic AMP is bound by residues arginine 536 and threonine 537. A coiled-coil region spans residues 597 to 651 (VQEKLEQLETNMDTLYTRFARLLAEYTGAQQKLKQRITVLETKMKQNNEDDSLSD). A disordered region spans residues 640 to 663 (MKQNNEDDSLSDGMNSPEPPAEKP).

Belongs to the cyclic nucleotide-gated cation channel (TC 1.A.1.5) family. CNGA2 subfamily. As to quaternary structure, the olfactory cyclic nucleotide-gated channel is an heterotetramer composed of CNGA2, CNGA4 and CNGB1b subunits with 2:1:1 stoichiometry. Olfactory neurons.

The protein localises to the cell projection. Its subcellular location is the cilium membrane. The catalysed reaction is Ca(2+)(in) = Ca(2+)(out). The enzyme catalyses Na(+)(in) = Na(+)(out). It carries out the reaction K(+)(in) = K(+)(out). It catalyses the reaction NH4(+)(in) = NH4(+)(out). The catalysed reaction is Rb(+)(in) = Rb(+)(out). The enzyme catalyses Li(+)(in) = Li(+)(out). It carries out the reaction Cs(+)(in) = Cs(+)(out). Functionally, pore-forming subunit of the olfactory cyclic nucleotide-gated channel. Operates in the cilia of olfactory sensory neurons where chemical stimulation of the odorant is converted to an electrical signal. Mediates odorant-induced cAMP-dependent Ca(2+) influx triggering neuron depolarization. The rise of intracellular Ca(2+) levels potentiates the olfactory response by activating Ca(2+)-dependent Cl(-) channels, but it also serves as a negative feedback signal to desensitize the channel for rapid adaptation to odorants. Conducts cAMP- and cGMP-gated ion currents, with permeability for monovalent and divalent cations. This is Cyclic nucleotide-gated channel alpha-2 from Bos taurus (Bovine).